The primary structure comprises 480 residues: Major capsid protein (480 aa).

It localises to the virion. Its function is as follows. Major protein of the capsid. The protein is Major capsid protein (MCP-1) of Trichoplusia ni ascovirus 2c (TnAV-2c).